A 727-amino-acid polypeptide reads, in one-letter code: Two-component response regulator-like APRR7 (727 aa).

Residues 1–47 (MNANEEGEGSRYPITDRKTGETKFDRVESRTEKHSEEEKTNGITMDV) are disordered. The span at 14–40 (ITDRKTGETKFDRVESRTEKHSEEEKT) shows a compositional bias: basic and acidic residues. A Response regulatory domain is found at 79–197 (RVLLVENDDC…ELKILWQHVW (119 aa)). Disordered regions lie at residues 203-265 (SSGS…KKAV), 291-312 (NPEF…QEHD), 339-416 (KDEP…KTLD), 464-487 (SRYN…SLQD), 509-560 (ESLP…QPLP), and 606-670 (VNGS…SQRE). Residues 246 to 259 (ASDGSSDGSGAQSS) show a composition bias toward low complexity. Polar residues-rich tracts occupy residues 344–353 (SKTTGIMRQD), 467–487 (NPAS…SLQD), and 519–535 (VGSN…NNAF). Over residues 538–555 (PGAPKVSSAGSSSVKHSS) the composition is skewed to low complexity. Gly residues predominate over residues 641–657 (GKNGNGDGSGSGSGSGS). A CCT domain is found at 669–711 (REAALTKFRQKRKERCFRKKVRYQSRKKLAEQRPRVRGQFVRK).

It belongs to the ARR-like family. Phosphorylated. Phosphorylation varies throughout the diurnal cycle.

It localises to the nucleus. In terms of biological role, transcriptional repressor of CCA1 and LHY, and positive regulator of LWD1 and LWD2 expression. Represses the expression of other clock proteins and master regulators of plant growth, development and response to abiotic stress. Involved in the positive and negative feedback loops of the circadian clock. Controls photoperiodic flowering response and temperature compensation. Expression of several members of the ARR-like family is controlled by circadian rhythm. APRR9, APRR7, and APRR5 coordinately act on the upstream region of the target genes to repress their expression from noon until midnight. The particular coordinated sequential expression of APRR9, APRR7, APRR5, APRR3 and APPR1 result to circadian waves that may be at the basis of the endogenous circadian clock. The polypeptide is Two-component response regulator-like APRR7 (APRR7) (Arabidopsis thaliana (Mouse-ear cress)).